A 192-amino-acid chain; its full sequence is MKRLEVSNQAKLPTQFGEFCIQCFREKGSNGSKDHLVIFTPNFPQNPLVRLHSECLTGDALGSQKCDCGGALQMALERISKEGGLVIYLRQEGRGIGLFNKVNAYALQDKGYDTIQANEMIGFKDDERDYSIAGEILEYYRIKKMRLLTNNPLKIAALEKYAEVTRESLIVCANEHNQGYLEVKKLKMGHLL.

50 to 54 (RLHSE) lines the GTP pocket. Residues C55, C66, and C68 each contribute to the Zn(2+) site. Residues 92–94 (EGR) and T114 contribute to the GTP site. The Proton acceptor role is filled by D126. Catalysis depends on R128, which acts as the Nucleophile. Residues T149 and K154 each contribute to the GTP site.

This sequence belongs to the GTP cyclohydrolase II family. Zn(2+) is required as a cofactor.

It catalyses the reaction GTP + 4 H2O = 2,5-diamino-6-hydroxy-4-(5-phosphoribosylamino)-pyrimidine + formate + 2 phosphate + 3 H(+). The protein operates within cofactor biosynthesis; riboflavin biosynthesis; 5-amino-6-(D-ribitylamino)uracil from GTP: step 1/4. Functionally, catalyzes the conversion of GTP to 2,5-diamino-6-ribosylamino-4(3H)-pyrimidinone 5'-phosphate (DARP), formate and pyrophosphate. This is GTP cyclohydrolase-2 from Helicobacter pylori (strain J99 / ATCC 700824) (Campylobacter pylori J99).